Reading from the N-terminus, the 347-residue chain is tRNA N6-adenosine threonylcarbamoyltransferase (347 aa).

Fe cation contacts are provided by histidine 111 and histidine 115. Substrate-binding positions include 133-137, aspartate 166, glycine 179, and asparagine 278; that span reads LASGG. Aspartate 306 lines the Fe cation pocket.

It belongs to the KAE1 / TsaD family. Fe(2+) serves as cofactor.

It is found in the cytoplasm. The enzyme catalyses L-threonylcarbamoyladenylate + adenosine(37) in tRNA = N(6)-L-threonylcarbamoyladenosine(37) in tRNA + AMP + H(+). Its function is as follows. Required for the formation of a threonylcarbamoyl group on adenosine at position 37 (t(6)A37) in tRNAs that read codons beginning with adenine. Is involved in the transfer of the threonylcarbamoyl moiety of threonylcarbamoyl-AMP (TC-AMP) to the N6 group of A37, together with TsaE and TsaB. TsaD likely plays a direct catalytic role in this reaction. The sequence is that of tRNA N6-adenosine threonylcarbamoyltransferase from Paramagnetospirillum magneticum (strain ATCC 700264 / AMB-1) (Magnetospirillum magneticum).